A 201-amino-acid chain; its full sequence is Retinol-binding protein 4 (201 aa).

The signal sequence occupies residues 1 to 18 (MEWVWALVLLAALGSGRG). 3 disulfides stabilise this stretch: Cys22-Cys178, Cys88-Cys192, and Cys138-Cys147. Gln116 contacts substrate. Arg139 is modified (omega-N-methylarginine).

The protein belongs to the calycin superfamily. Lipocalin family. In terms of assembly, interacts with TTR. Interaction with TTR prevents its loss by filtration through the kidney glomeruli. Interacts with STRA6.

It is found in the secreted. Retinol-binding protein that mediates retinol transport in blood plasma. Delivers retinol from the liver stores to the peripheral tissues. Transfers the bound all-trans retinol to STRA6, that then facilitates retinol transport across the cell membrane. In Oryctolagus cuniculus (Rabbit), this protein is Retinol-binding protein 4 (RBP4).